The sequence spans 242 residues: GLIPR1-like protein 1 (242 aa).

Positions 1 to 22 (MALKNKFSCLWILGLCLVATTS) are cleaved as a signal peptide. The SCP domain maps to 39-171 (EAHNEWRGKV…ASTAIFVCNY (133 aa)). N-linked (GlcNAc...) asparagine glycosylation is present at Asn-119. Residue Gly-221 is the site of GPI-anchor amidated glycine attachment. The propeptide at 222 to 242 (RAPQQTAFNPFSLGFLLLRIF) is removed in mature form.

Belongs to the CRISP family. Part of a oolemmal binding multimeric complex (IZUMO1 complex) composed at least of IZUMO1 and GLIPR1L1; the complex assemblage is influenced by the maturation status of the male germ cell. Interacts with IZUMO1. N-glycosylated. N-glycosylation decreases during the transit in the caput. As to expression, highly expressed in testis.

The protein resides in the cytoplasmic vesicle. It is found in the secretory vesicle. It localises to the acrosome. Its subcellular location is the cell membrane. The protein localises to the membrane raft. The protein resides in the secreted. Its function is as follows. Required for optimal fertilization at the stage of sperm-oocyte fusion, plays a role in optimizing acrosome function, the translocation of IZUMO1 during the acrosome reaction and the fertilization process. Component of epididymosomes, one type of membranous microvesicules which mediate the transfer of lipids and proteins to spermatozoa plasma membrane during epididymal maturation. Also component of the CD9-positive microvesicules found in the cauda region. The protein is GLIPR1-like protein 1 (GLIPR1L1) of Homo sapiens (Human).